A 315-amino-acid chain; its full sequence is Probable cell division protein WhiA (315 aa).

A DNA-binding region (H-T-H motif) is located at residues 275–309; that stretch reads NLKELGEMVPSGVVSKSGINHRLRKINEIADKIRE.

It belongs to the WhiA family.

In terms of biological role, involved in cell division and chromosome segregation. In Brevibacillus brevis (strain 47 / JCM 6285 / NBRC 100599), this protein is Probable cell division protein WhiA.